We begin with the raw amino-acid sequence, 509 residues long: Transmembrane protein 180 (509 aa).

Topologically, residues 1-10 are extracellular; it reads MGLRLLACLF. The chain crosses the membrane as a helical span at residues 11-42; the sequence is HLPTAVIYGSLSLFVSILHNVFLLYYVDTFVS. Residues 43-54 lie on the Cytoplasmic side of the membrane; the sequence is VYKIDKLSFWIG. Residues 55–73 traverse the membrane as a helical segment; sequence ETVFLIWNSLNDPLFGWLS. Topologically, residues 74–98 are extracellular; the sequence is DRVFLSTQQPGAEISSPEVVLKRLR. The chain crosses the membrane as a helical span at residues 99–116; sequence ALSHNGPLFAISFLAFWV. Topologically, residues 117-124 are cytoplasmic; that stretch reads AWAHPGLQ. The helical transmembrane segment at 125 to 149 threads the bilayer; that stretch reads FLLCLCMYDSFLTMVDLHHNALLAD. The Extracellular portion of the chain corresponds to 150–153; sequence LAVS. The helical transmembrane segment at 154 to 177 threads the bilayer; the sequence is AKDRTSLNFYCSFFSAIGSLSVFM. Topologically, residues 178–189 are cytoplasmic; it reads SYAVWNKEDFFS. The helical transmembrane segment at 190–221 threads the bilayer; it reads FRIFCIVLAFCSIVGFTLSTQLLRQRFETDGK. At 222–259 the chain is on the extracellular side; that stretch reads AKWDQESTLKELYIEKLSVPQEKRITLVEYLQQLSRHR. A helical transmembrane segment spans residues 260–287; it reads NFLWFVCMNLIQVFHCHFNSNFFPLFLE. Topologically, residues 288 to 300 are cytoplasmic; that stretch reads HLLSDKISVSTGS. Residues 301–320 traverse the membrane as a helical segment; the sequence is FLLGISYIAPHLNNLYFLSL. Over 321–325 the chain is Extracellular; sequence CRRWG. Residues 326–345 traverse the membrane as a helical segment; sequence VYAVVRGLFFLKLALSVVML. Residues 346–353 lie on the Cytoplasmic side of the membrane; sequence LAGPDQVY. The helical transmembrane segment at 354 to 388 threads the bilayer; it reads LLCIFIASNRVFTEGTCKLLNLVVTDLVDEDLVLN. The Extracellular portion of the chain corresponds to 389–397; it reads RRKQAASAL. A helical membrane pass occupies residues 398–424; the sequence is LFGMVALVTKPGQTFAPLIGTWLLCVY. Topologically, residues 425–458 are cytoplasmic; sequence TGYDIFQRNPLSNVVSAQPKLESDTILEPTLRQG. Residues 459-477 traverse the membrane as a helical segment; sequence CFYLLVFVPITCALLQLLS. The Extracellular portion of the chain corresponds to 478–509; sequence WTQFSLHGKRLQMVKAQRQGLMQGRAPEIKMI.

It localises to the cell membrane. The chain is Transmembrane protein 180 from Gallus gallus (Chicken).